Consider the following 98-residue polypeptide: Citrate lyase acyl carrier protein (98 aa).

At S14 the chain carries O-(phosphoribosyl dephospho-coenzyme A)serine.

This sequence belongs to the CitD family. In terms of assembly, oligomer with a subunit composition of (alpha,beta,gamma)6.

The protein resides in the cytoplasm. Functionally, covalent carrier of the coenzyme of citrate lyase. This Escherichia coli O81 (strain ED1a) protein is Citrate lyase acyl carrier protein.